The primary structure comprises 173 residues: Photosystem I assembly protein Ycf3 (173 aa).

TPR repeat units lie at residues 35–68 (AYIY…EENK), 72–105 (GETL…NPKQ), and 120–153 (GRYA…YPGG).

This sequence belongs to the Ycf3 family.

The protein localises to the cellular thylakoid membrane. Its function is as follows. Essential for the assembly of the photosystem I (PSI) complex. May act as a chaperone-like factor to guide the assembly of the PSI subunits. The polypeptide is Photosystem I assembly protein Ycf3 (Prochlorococcus marinus (strain MIT 9215)).